The primary structure comprises 85 residues: Beta-insect depressant toxin BmKITa (85 aa).

The N-terminal stretch at Met-1–Ala-21 is a signal peptide. The LCN-type CS-alpha/beta domain maps to Asp-22–Gly-82. 4 disulfide bridges follow: Cys-31–Cys-81, Cys-35–Cys-56, Cys-42–Cys-63, and Cys-46–Cys-65. Position 82 is a glycine amide (Gly-82).

Expressed by the venom gland.

It is found in the secreted. Functionally, depressant insect beta-toxins cause a transient contraction paralysis followed by a slow flaccid paralysis. They bind voltage-independently at site-4 of sodium channels (Nav) and shift the voltage of activation toward more negative potentials thereby affecting sodium channel activation and promoting spontaneous and repetitive firing. This toxin also displays an evident analgesic effect but is devoid of any toxicity on mice. In Olivierus martensii (Manchurian scorpion), this protein is Beta-insect depressant toxin BmKITa.